We begin with the raw amino-acid sequence, 358 residues long: Fructose-bisphosphate aldolase (358 aa).

D-glyceraldehyde 3-phosphate is bound at residue S62. The active-site Proton donor is the D109. Zn(2+)-binding residues include H110, D144, E174, and H226. G227 is a dihydroxyacetone phosphate binding site. H264 contributes to the Zn(2+) binding site. Dihydroxyacetone phosphate contacts are provided by residues 265-267 (GGS) and 286-289 (NIDT).

The protein belongs to the class II fructose-bisphosphate aldolase family. Zn(2+) is required as a cofactor.

It catalyses the reaction beta-D-fructose 1,6-bisphosphate = D-glyceraldehyde 3-phosphate + dihydroxyacetone phosphate. Its pathway is carbohydrate degradation; glycolysis; D-glyceraldehyde 3-phosphate and glycerone phosphate from D-glucose: step 4/4. Its function is as follows. Catalyzes the aldol condensation of dihydroxyacetone phosphate (DHAP or glycerone-phosphate) with glyceraldehyde 3-phosphate (G3P) to form fructose 1,6-bisphosphate (FBP) in gluconeogenesis and the reverse reaction in glycolysis. In Edwardsiella ictaluri (strain 93-146), this protein is Fructose-bisphosphate aldolase (fba).